Consider the following 207-residue polypeptide: MAQGTLYIVSAPSGAGKSSLIQALLKTQPLYDTQVSVSHTTRQPRPGEVHGEHYFFVNHDEFKEMISRDAFLEHAEVFGNYYGTSREAIEQVLATGVDVFLDIDWQGAQQIRQKMPHARSIFILPPSKIELDRRLRGRGQDSEEVIAKRMAQAVAEMSHYAEYDYLIVNDDFDTALTDLKTIIRAERLRMSRQKQRHDALISKLLAD.

A Guanylate kinase-like domain is found at 4–184; sequence GTLYIVSAPS…ALTDLKTIIR (181 aa). An ATP-binding site is contributed by 11 to 18; that stretch reads APSGAGKS.

This sequence belongs to the guanylate kinase family.

It is found in the cytoplasm. It catalyses the reaction GMP + ATP = GDP + ADP. Essential for recycling GMP and indirectly, cGMP. The sequence is that of Guanylate kinase from Escherichia coli O6:K15:H31 (strain 536 / UPEC).